The primary structure comprises 510 residues: MDGFYDQQVPFMVPGKSRSEECRGRPVIDRKRKFLDTDLAHDSEELFQDLSQLQEAWLAEAQVPDDEQFVPDFQSDNLVLHAPPPTKIKRELHSPSSELSSCSHEQALGANYGEKCLYNYCAYDRKPPSGFKPLTPPTTPLSPTHQNPLFPPPQATLPTSGHAPAAGPVQGVGPAPAPHSLPEPGPQQQTFAVPRPPHQPLQMPKMMPENQYPSEQRFQRQLSEPCHPFPPQPGVPGDNRPSYHRQMSEPIVPAAPPPPQGFKQEYHDPLYEHGVPGMPGPPAHGFQSPMGIKQEPRDYCVDSEVPNCQSSYMRGGYFSSSHEGFSYEKDPRLYFDDTCVVPERLEGKVKQEPTMYREGPPYQRRGSLQLWQFLVTLLDDPANAHFIAWTGRGMEFKLIEPEEVARRWGIQKNRPAMNYDKLSRSLRYYYEKGIMQKVAGERYVYKFVCDPDALFSMAFPDNQRPFLKAESECHLSEEDTLPLTHFEDSPAYLLDMDRCSSLPYAEGFAY.

Residues 131–208 form a disordered region; the sequence is FKPLTPPTTP…QPLQMPKMMP (78 aa). Residues 161–174 are compositionally biased toward low complexity; it reads GHAPAAGPVQGVGP. The span at 175 to 185 shows a compositional bias: pro residues; that stretch reads APAPHSLPEPG. The residue at position 248 (serine 248) is a Phosphoserine. Lysine 350 participates in a covalent cross-link: Glycyl lysine isopeptide (Lys-Gly) (interchain with G-Cter in SUMO2). A DNA-binding region (ETS) is located at residues 368–448; the sequence is LQLWQFLVTL…AGERYVYKFV (81 aa).

Interacts (via C-terminal) with ZMYM5 (via N-terminal 120 amino acid region). Ubiquitous.

It is found in the nucleus. In terms of biological role, binds to DNA sequences containing the consensus nucleotide core sequence 5'-GGAA.-3'. This Homo sapiens (Human) protein is ETS translocation variant 5 (ETV5).